The following is a 355-amino-acid chain: MSIQTKQNINVLSANMHNASIQTAIEQLISNQSLSYTQSKALFDEIMQGNMSDIELSALLIALKSKGEISDEIAGAAASMRENALAFNTTRNQLADCCGTGGDGSNTINISTTAAIVAAAAGINMVKHGNRSVSSNSGSADLLKALGINIEMTPAQAANCLEQTGFTFLFAPQYHPGVRHAMGVRTALKTRTIFNILGPLVNPAAPEVQLLGVYNPNLCLPMAQTLRTLGTKRAMIVHGSGTDEIALHGPTTVVELNNGNISEYTLNPSDFDLANYSLEQLTGEGPQYNANVSLAILQGKGDEAHNAAIIVNVAALLYLSGKAQSLKDGAHKVHTLLSSGQAMNTLNAIIEVSNG.

5-phospho-alpha-D-ribose 1-diphosphate is bound by residues glycine 99, 102–103, threonine 107, 109–112, 127–135, and serine 139; these read GD, NIST, and KHGNRSVSS. Anthranilate is bound at residue glycine 99. Serine 111 contacts Mg(2+). Asparagine 130 contributes to the anthranilate binding site. An anthranilate-binding site is contributed by arginine 185. Residues aspartate 243 and glutamate 244 each contribute to the Mg(2+) site.

The protein belongs to the anthranilate phosphoribosyltransferase family. In terms of assembly, homodimer. Mg(2+) is required as a cofactor.

It catalyses the reaction N-(5-phospho-beta-D-ribosyl)anthranilate + diphosphate = 5-phospho-alpha-D-ribose 1-diphosphate + anthranilate. Its pathway is amino-acid biosynthesis; L-tryptophan biosynthesis; L-tryptophan from chorismate: step 2/5. Functionally, catalyzes the transfer of the phosphoribosyl group of 5-phosphorylribose-1-pyrophosphate (PRPP) to anthranilate to yield N-(5'-phosphoribosyl)-anthranilate (PRA). This is Anthranilate phosphoribosyltransferase from Pseudoalteromonas translucida (strain TAC 125).